Here is a 700-residue protein sequence, read N- to C-terminus: MSKSAFTSKSQLKGIDGSFNDPFRQPSMNLPTPPHDDGLPSIPRSTALPNLSNRLSPYSHRNYLPIPEADSRNLEVLNSISLTTGSVVNQINKLYQRSCDNANYLQDLRSLILQTPTAEANATQVTESLNQIQKILQEASSKDREQIVQVIKELNKGNSLEVRRELGNCLAHLKKGTLNIDNALQASLQKYWKELQYFNVSKDKLLSLEESIKLLSARLEETDTPSSTHWIEINAGFKEVGDELSENFQRKQEILSGLQNNVILRTNNRKPVGSDGSNSNFNGGEEQMDSKDQEEIQDYLNSLLSVHEKDGVLLQKFHNSYVQYQKLAVALSKYENFDADKLFQQMNLAKQSNETLLQTLTEQTDQLLSFKETMDSFKFILGPSMENQALQQGILAEQQDLVAQLRDIVLRSETLAENPSNMPGSCLPGASSNTADEFTEQLNLLKNEVARLSAICPSPNSGINASVLTNADNLEKENLLLVNNNAFKVDDRSVSSVALDDHNRQLQMNVEELEGKKADLTSKINRLDKDFVKLNTTYSLLTDQVKTKQLALQEIESRVIRLEERLNMLQKLSMQPAISSSSEFVPIESHPSSSAVVPIEEPKNSIIEKKRVPHNAARNSVNLEVTLPNSKKRFSSFSGSSSKLPVRPSTALTDKRKPSWSRRLAAAIGFSSGSPEKKHVITSSDAGHQRSKSRSFSSKM.

Polar residues-rich tracts occupy residues 1–11 and 43–53; these read MSKSAFTSKSQ and PRSTALPNLSN. Disordered regions lie at residues 1-53 and 266-293; these read MSKS…NLSN and TNNRKPVGSDGSNSNFNGGEEQMDSKDQ. The segment covering 273 to 284 has biased composition (low complexity); it reads GSDGSNSNFNGG. Positions 496 to 575 form a coiled coil; it reads SVALDDHNRQ…LNMLQKLSMQ (80 aa). Disordered regions lie at residues 634-659 and 671-700; these read FSSFSGSSSKLPVRPSTALTDKRKPS and SSGSPEKKHVITSSDAGHQRSKSRSFSSKM. At Ser636 the chain carries Phosphoserine.

As to quaternary structure, interacts with cdr2, mid1 and sad1.

It is found in the cytoplasm. The protein resides in the cytoskeleton. Functionally, at the onset of mitosis, forms a medial ring structure before the arrangement of the medial actin ring. Essential for the central positioning of the division septum before the cell divides. This is Mitosis inducer protein blt1 (blt1) from Schizosaccharomyces pombe (strain 972 / ATCC 24843) (Fission yeast).